Consider the following 398-residue polypeptide: 1-deoxy-D-xylulose 5-phosphate reductoisomerase (398 aa).

NADPH is bound by residues Thr11, Gly12, Ser13, Ile14, Arg38, Asn39, and Asn125. Lys126 contributes to the 1-deoxy-D-xylulose 5-phosphate binding site. Glu127 contacts NADPH. Asp151 is a binding site for Mn(2+). 4 residues coordinate 1-deoxy-D-xylulose 5-phosphate: Ser152, Glu153, Ser179, and His202. Glu153 is a binding site for Mn(2+). Residue Gly208 participates in NADPH binding. Ser215, Asn220, Lys221, and Glu224 together coordinate 1-deoxy-D-xylulose 5-phosphate. Glu224 contacts Mn(2+).

Belongs to the DXR family. Mg(2+) serves as cofactor. Mn(2+) is required as a cofactor.

It catalyses the reaction 2-C-methyl-D-erythritol 4-phosphate + NADP(+) = 1-deoxy-D-xylulose 5-phosphate + NADPH + H(+). Its pathway is isoprenoid biosynthesis; isopentenyl diphosphate biosynthesis via DXP pathway; isopentenyl diphosphate from 1-deoxy-D-xylulose 5-phosphate: step 1/6. Functionally, catalyzes the NADPH-dependent rearrangement and reduction of 1-deoxy-D-xylulose-5-phosphate (DXP) to 2-C-methyl-D-erythritol 4-phosphate (MEP). This chain is 1-deoxy-D-xylulose 5-phosphate reductoisomerase, found in Burkholderia cenocepacia (strain HI2424).